A 333-amino-acid chain; its full sequence is Taste receptor type 2 member 38 (333 aa).

At 1 to 17 (MLTLTRIRTVSYEVRST) the chain is on the extracellular side. Residues 18-38 (FLFISVLEFAVGFLTNAFVFL) form a helical membrane-spanning segment. Over 39-55 (VNFWDVVKRQPLSNSDC) the chain is Cytoplasmic. A helical transmembrane segment spans residues 56 to 76 (VLLCLSISRLFLHGLLFLSAI). The Extracellular portion of the chain corresponds to 77–94 (QLTHFQKLSEPLNHSYQA). Residues 95–115 (IIMLWMIANQANLWLAACLSL) traverse the membrane as a helical segment. Topologically, residues 116–142 (LYCSKLIRFSHTFLICLASWVSRKISQ) are cytoplasmic. Residues 143–163 (MLLGIILCSCICTVLCVWCFF) traverse the membrane as a helical segment. Topologically, residues 164 to 190 (SRPHFTVTTVLFMNNNTRLNWQIKDLN) are extracellular. Asparagine 178 is a glycosylation site (N-linked (GlcNAc...) asparagine). Residues 191 to 211 (LFYSFLFCYLWSVPPFLLFLV) form a helical membrane-spanning segment. The Cytoplasmic portion of the chain corresponds to 212–251 (SSGMLTVSLGRHMRTMKVYIRDSRDPSLEAHIKALKSLVS). The chain crosses the membrane as a helical span at residues 252 to 272 (FFCFFVISSCAAFISVPLLIL). Residues 273 to 276 (WRDK) lie on the Extracellular side of the membrane. A helical transmembrane segment spans residues 277–297 (IGVMVCVGIMAACPSGHAAVL). Residues 298 to 333 (ISGNAKLRRAVTTILLWAQSSLKVRADHKADSRTPC) lie on the Cytoplasmic side of the membrane.

The protein belongs to the G-protein coupled receptor T2R family.

It localises to the membrane. Functionally, receptor that may play a role in the perception of bitterness and is gustducin-linked. May play a role in sensing the chemical composition of the gastrointestinal content. The activity of this receptor may stimulate alpha gustducin, mediate PLC-beta-2 activation and lead to the gating of TRPM5. This Gorilla gorilla gorilla (Western lowland gorilla) protein is Taste receptor type 2 member 38 (TAS2R38).